The following is a 293-amino-acid chain: MTLIDGKAISEQVKQEIAAEVAEIVAHGGKRPHLAAILVGHDGGSETYVAAKVKACEVCGFKSSLIRYESDVTEDELLAKVRELNEDDDVDGFIVQLPLPKHISEQKVIETIDYRKDVDGFHPINVGRMSIGLPCYVSATPNGILELLKRYRIETSGKKCVVLGRSNIVGKPMAALMMQKAYPGDATVTVCHSRSKDLVKECREADIIIAALGQPNFVKAEMVKEGAVVIDVGTTRVPDASKKSGFKLTGDVKFDEVSPKCSFITPVPGGVGPMTIVSLMKNTLLAGKKAIYQ.

NADP(+)-binding positions include 164–166, Ser193, and Thr234; that span reads GRS.

The protein belongs to the tetrahydrofolate dehydrogenase/cyclohydrolase family. As to quaternary structure, homodimer.

The enzyme catalyses (6R)-5,10-methylene-5,6,7,8-tetrahydrofolate + NADP(+) = (6R)-5,10-methenyltetrahydrofolate + NADPH. It catalyses the reaction (6R)-5,10-methenyltetrahydrofolate + H2O = (6R)-10-formyltetrahydrofolate + H(+). It functions in the pathway one-carbon metabolism; tetrahydrofolate interconversion. In terms of biological role, catalyzes the oxidation of 5,10-methylenetetrahydrofolate to 5,10-methenyltetrahydrofolate and then the hydrolysis of 5,10-methenyltetrahydrofolate to 10-formyltetrahydrofolate. This chain is Bifunctional protein FolD, found in Bacteroides fragilis (strain ATCC 25285 / DSM 2151 / CCUG 4856 / JCM 11019 / LMG 10263 / NCTC 9343 / Onslow / VPI 2553 / EN-2).